The following is a 647-amino-acid chain: 1-deoxy-D-xylulose-5-phosphate synthase (647 aa).

Residues H88 and G129–A131 each bind thiamine diphosphate. D160 provides a ligand contact to Mg(2+). Thiamine diphosphate is bound by residues G161–A162, N189, Y300, and E377. Residue N189 participates in Mg(2+) binding.

Belongs to the transketolase family. DXPS subfamily. As to quaternary structure, homodimer. The cofactor is Mg(2+). Requires thiamine diphosphate as cofactor.

It carries out the reaction D-glyceraldehyde 3-phosphate + pyruvate + H(+) = 1-deoxy-D-xylulose 5-phosphate + CO2. It functions in the pathway metabolic intermediate biosynthesis; 1-deoxy-D-xylulose 5-phosphate biosynthesis; 1-deoxy-D-xylulose 5-phosphate from D-glyceraldehyde 3-phosphate and pyruvate: step 1/1. Functionally, catalyzes the acyloin condensation reaction between C atoms 2 and 3 of pyruvate and glyceraldehyde 3-phosphate to yield 1-deoxy-D-xylulose-5-phosphate (DXP). This is 1-deoxy-D-xylulose-5-phosphate synthase from Dehalococcoides mccartyi (strain CBDB1).